We begin with the raw amino-acid sequence, 568 residues long: MSASVFNRCWSKVILETLSRQGVSHFCIAPGSRSTPLTLEAIRLQENGRGTCHAHFDERSLGFFALGIAKASKKPVAVIVTSGTATANLYPAIIEARQTDVPLIILTADRPPELLECGANQAILQQNMFAQYPIASINLPRPSQNYSAQWLISVLDQACFRQKQGGVIHINVPFAEPLYNANNDEIDLHPWLSNIQSWLTQNKNWIQHQEQHTEVITHKYWDQWRTKKGIIIVGRLPSEQAMGIAEWADNMGWIMITDIQSHVKPTLPYADIWLANQTVRKKLLQAEIVIQFGSGFIGKRINQFLAEFKGEYWIIENNQKAVDPYHHAHTRFNAKPHHWLRAHPPMRKKPWLLEPLALAKFCADFIKQRVGSNLNEASLAHNIELLLPKSNSVLFLGNSLFVRLADALSQPSANYPIYTNRGASGIDGLLATAAGIAVGSEQTLVAMIGDTSTLYDLNSFALFKQLNQPAIIFVINNNGGAIFDMLPVDIAVKEKYYRMSHYLEFSHIAAMFDLKYARPYTWADLATVLKQAYSRRETTVIEIKVNPNDGSNIYKDLIDKIGHALIGV.

It belongs to the TPP enzyme family. MenD subfamily. Homodimer. Mg(2+) serves as cofactor. The cofactor is Mn(2+). It depends on thiamine diphosphate as a cofactor.

The catalysed reaction is isochorismate + 2-oxoglutarate + H(+) = 5-enolpyruvoyl-6-hydroxy-2-succinyl-cyclohex-3-ene-1-carboxylate + CO2. The protein operates within quinol/quinone metabolism; 1,4-dihydroxy-2-naphthoate biosynthesis; 1,4-dihydroxy-2-naphthoate from chorismate: step 2/7. It functions in the pathway quinol/quinone metabolism; menaquinone biosynthesis. Catalyzes the thiamine diphosphate-dependent decarboxylation of 2-oxoglutarate and the subsequent addition of the resulting succinic semialdehyde-thiamine pyrophosphate anion to isochorismate to yield 2-succinyl-5-enolpyruvyl-6-hydroxy-3-cyclohexene-1-carboxylate (SEPHCHC). The sequence is that of 2-succinyl-5-enolpyruvyl-6-hydroxy-3-cyclohexene-1-carboxylate synthase from Histophilus somni (strain 129Pt) (Haemophilus somnus).